Consider the following 317-residue polypeptide: Pseudouridine-5'-phosphate glycosidase (317 aa).

Glu27 acts as the Proton donor in catalysis. Positions 89 and 109 each coordinate substrate. Asp141 contributes to the Mn(2+) binding site. Residue 143–145 (SAD) coordinates substrate. Residue Lys162 is the Nucleophile of the active site.

The protein belongs to the pseudouridine-5'-phosphate glycosidase family. In terms of assembly, homotrimer. Mn(2+) is required as a cofactor.

It carries out the reaction D-ribose 5-phosphate + uracil = psi-UMP + H2O. Catalyzes the reversible cleavage of pseudouridine 5'-phosphate (PsiMP) to ribose 5-phosphate and uracil. Functions biologically in the cleavage direction, as part of a pseudouridine degradation pathway. This Sorangium cellulosum (strain So ce56) (Polyangium cellulosum (strain So ce56)) protein is Pseudouridine-5'-phosphate glycosidase.